The sequence spans 233 residues: tRNA (guanine-N(7)-)-methyltransferase (233 aa).

The segment at 1 to 23 (MSPQDRPSRTTEAFFGRRRGKPV) is disordered. S-adenosyl-L-methionine is bound by residues E64, E89, D116, and D138. D138 is a catalytic residue. Residues K142, D174, and 212–215 (TRYE) each bind substrate.

Belongs to the class I-like SAM-binding methyltransferase superfamily. TrmB family.

It carries out the reaction guanosine(46) in tRNA + S-adenosyl-L-methionine = N(7)-methylguanosine(46) in tRNA + S-adenosyl-L-homocysteine. The protein operates within tRNA modification; N(7)-methylguanine-tRNA biosynthesis. Catalyzes the formation of N(7)-methylguanine at position 46 (m7G46) in tRNA. The polypeptide is tRNA (guanine-N(7)-)-methyltransferase (Mesorhizobium japonicum (strain LMG 29417 / CECT 9101 / MAFF 303099) (Mesorhizobium loti (strain MAFF 303099))).